Reading from the N-terminus, the 391-residue chain is Homoserine O-acetyltransferase (391 aa).

Residues 50 to 360 (NAILICHALT…DKGHDAFLLD (311 aa)) enclose the AB hydrolase-1 domain. Ser-155 functions as the Nucleophile in the catalytic mechanism. Arg-225 serves as a coordination point for substrate. Residues Asp-321 and His-354 contribute to the active site. Asp-355 contacts substrate.

Belongs to the AB hydrolase superfamily. MetX family. Homodimer.

It localises to the cytoplasm. The catalysed reaction is L-homoserine + acetyl-CoA = O-acetyl-L-homoserine + CoA. It participates in amino-acid biosynthesis; L-methionine biosynthesis via de novo pathway; O-acetyl-L-homoserine from L-homoserine: step 1/1. Transfers an acetyl group from acetyl-CoA to L-homoserine, forming acetyl-L-homoserine. The polypeptide is Homoserine O-acetyltransferase (Rhodospirillum rubrum (strain ATCC 11170 / ATH 1.1.1 / DSM 467 / LMG 4362 / NCIMB 8255 / S1)).